The sequence spans 636 residues: Chaperone protein DnaK (636 aa).

At Thr-196 the chain carries Phosphothreonine; by autocatalysis. The interval 591–636 (LAEAMYKSSSQPGAQEAPPTDGQPKPDEKGKDNVVDAEFVDVDDKK) is disordered. Residues 614–624 (PKPDEKGKDNV) are compositionally biased toward basic and acidic residues.

It belongs to the heat shock protein 70 family.

Acts as a chaperone. In Solibacter usitatus (strain Ellin6076), this protein is Chaperone protein DnaK.